A 953-amino-acid polypeptide reads, in one-letter code: Ubiquitin carboxyl-terminal hydrolase CYLD (953 aa).

Positions 106-590 (CEERLSLFRN…LEIMIGKKKG (485 aa)) are interaction with TRIP. 2 CAP-Gly domains span residues 153–198 (LAER…VFVA) and 253–286 (DVLP…VQLC). A disordered region spans residues 318 to 350 (FMSRGVGDKGSSSHNKPKVTGSTSDPGSRNRSE). A compositionally biased stretch (polar residues) spans 327–346 (GSSSHNKPKVTGSTSDPGSR). Position 384 is a phosphoserine (S384). The disordered stretch occupies residues 387–410 (EMSSDFGHSSPPPQPPSMNSLSSE). Residues 391–466 (DFGHSSPPPQ…MPSSSGNAHG (76 aa)) form an interaction with TRAF2 region. Phosphoserine is present on residues S415 and S419. Residues 467–681 (LEVGSLAEVK…FTSEEKDPEE (215 aa)) form an interaction with IKBKG/NEMO region. The CAP-Gly 3 domain occupies 489–532 (GQPPGLSDVLAGLELEDECAGCTDGTFRGTRYFTCALKKALFVK). The 359-residue stretch at 589-947 (KGIQGHYNSC…DAYMCMYQSP (359 aa)) folds into the USP domain. The active-site Nucleophile is the C598. The B-box stretch occupies residues 778-830 (LEDTPRQCRICGGLAMYECRECYDDPDISAGKIKQFCKTCSTQVHLHPRRLNH). The Zn(2+) site is built by C785, C788, C796, C799, C814, C817, H822, and H830. H868 functions as the Proton acceptor in the catalytic mechanism.

It belongs to the peptidase C19 family. As to quaternary structure, interacts (via CAP-Gly domain) with IKBKG/NEMO (via proline-rich C-terminal region). Interacts with TRAF2 and TRIP. Interacts with PLK1, DVL1, DVL3, MAVS, TBK1, IKKE and RIGI. Interacts (via CAP-Gly domain) with microtubules. Interacts with HDAC6 and BCL3. Interacts with MAP3K7. Identified in a complex with TRAF6 and SQSTM1. Interacts with OPTN and SQSTM1. Interacts with CEP350. Interacts with RNF31; the interaction is indirect and is mediated via SPATA2. Interacts with SPATA2 (via the PUB domain); the interaction is direct and recruits CYLD to the LUBAC complex, thereby regulating TNF-alpha-induced necroptosis. Post-translationally, phosphorylated on several serine residues by IKKA and/or IKKB in response to immune stimuli. Phosphorylation requires IKBKG. Phosphorylation abolishes TRAF2 deubiquitination, interferes with the activation of Jun kinases, and strongly reduces CD40-dependent gene activation by NF-kappa-B. In terms of processing, ubiquitinated. Polyubiquitinated in hepatocytes treated with palmitic acid. Ubiquitination is mediated by E3 ligase TRIM47 and leads to proteasomal degradation.

It is found in the cytoplasm. Its subcellular location is the perinuclear region. It localises to the cytoskeleton. The protein localises to the cell membrane. The protein resides in the microtubule organizing center. It is found in the centrosome. Its subcellular location is the spindle. It localises to the cilium basal body. It catalyses the reaction Thiol-dependent hydrolysis of ester, thioester, amide, peptide and isopeptide bonds formed by the C-terminal Gly of ubiquitin (a 76-residue protein attached to proteins as an intracellular targeting signal).. Its function is as follows. Deubiquitinase that specifically cleaves 'Lys-63'- and linear 'Met-1'-linked polyubiquitin chains and is involved in NF-kappa-B activation and TNF-alpha-induced necroptosis. Negatively regulates NF-kappa-B activation by deubiquitinating upstream signaling factors. Contributes to the regulation of cell survival, proliferation and differentiation via its effects on NF-kappa-B activation. Negative regulator of Wnt signaling. Inhibits HDAC6 and thereby promotes acetylation of alpha-tubulin and stabilization of microtubules. Plays a role in the regulation of microtubule dynamics, and thereby contributes to the regulation of cell proliferation, cell polarization, cell migration, and angiogenesis. Required for normal cell cycle progress and normal cytokinesis. Inhibits nuclear translocation of NF-kappa-B. Plays a role in the regulation of inflammation and the innate immune response, via its effects on NF-kappa-B activation. Dispensable for the maturation of intrathymic natural killer cells, but required for the continued survival of immature natural killer cells. Negatively regulates TNFRSF11A signaling and osteoclastogenesis. Involved in the regulation of ciliogenesis, allowing ciliary basal bodies to migrate and dock to the plasma membrane; this process does not depend on NF-kappa-B activation. Ability to remove linear ('Met-1'-linked) polyubiquitin chains regulates innate immunity and TNF-alpha-induced necroptosis: recruited to the LUBAC complex via interaction with SPATA2 and restricts linear polyubiquitin formation on target proteins. Regulates innate immunity by restricting linear polyubiquitin formation on RIPK2 in response to NOD2 stimulation. Involved in TNF-alpha-induced necroptosis by removing linear ('Met-1'-linked) polyubiquitin chains from RIPK1, thereby regulating the kinase activity of RIPK1. Negatively regulates intestinal inflammation by removing 'Lys-63' linked polyubiquitin chain of NLRP6, thereby reducing the interaction between NLRP6 and PYCARD/ASC and formation of the NLRP6 inflammasome. Does not catalyze deubiquitination of heterotypic 'Lys-63'-/'Lys-48'-linked branched ubiquitin chains. Removes 'Lys-63' linked polyubiquitin chain of MAP3K7, which inhibits phosphorylation and blocks downstream activation of the JNK-p38 kinase cascades. Also removes 'Lys-63'-linked polyubiquitin chains of MAP3K1 and MA3P3K3, which inhibit their interaction with MAP2K1 and MAP2K2. This is Ubiquitin carboxyl-terminal hydrolase CYLD (Cyld) from Rattus norvegicus (Rat).